The following is a 650-amino-acid chain: Chaperone protein DnaK (650 aa).

T200 carries the phosphothreonine; by autocatalysis modification. Positions 614-635 (AGAAGAAGAAEGAAHAGGAQQA) are disordered.

This sequence belongs to the heat shock protein 70 family.

In terms of biological role, acts as a chaperone. This Burkholderia lata (strain ATCC 17760 / DSM 23089 / LMG 22485 / NCIMB 9086 / R18194 / 383) protein is Chaperone protein DnaK.